We begin with the raw amino-acid sequence, 94 residues long: Ribonuclease VapC3 (94 aa).

Asp6 provides a ligand contact to Mg(2+).

It belongs to the PINc/VapC protein family. The cofactor is Mg(2+).

Toxic component of a type II toxin-antitoxin (TA) system. An RNase. Its cognate antitoxin is VapB3. The sequence is that of Ribonuclease VapC3 (vapC3) from Methanocaldococcus jannaschii (strain ATCC 43067 / DSM 2661 / JAL-1 / JCM 10045 / NBRC 100440) (Methanococcus jannaschii).